A 374-amino-acid chain; its full sequence is UPF0674 endoplasmic reticulum membrane protein C2G5.01 (374 aa).

Residues 49-68 (FRLEFVILACFFLYVFSFIT) form a helical membrane-spanning segment. N-linked (GlcNAc...) asparagine glycosylation is present at N287. The tract at residues 335-374 (KAAKKKVKSSGDISKLSESDQKKRMERERQRKMRRRAKKM) is disordered. Residues 349–363 (KLSESDQKKRMERER) show a composition bias toward basic and acidic residues. Positions 364-374 (QRKMRRRAKKM) are enriched in basic residues.

Belongs to the UPF0674 family.

It localises to the endoplasmic reticulum membrane. This is UPF0674 endoplasmic reticulum membrane protein C2G5.01 from Schizosaccharomyces pombe (strain 972 / ATCC 24843) (Fission yeast).